The sequence spans 529 residues: Tyrosinase (529 aa).

The first 18 residues, 1–18 (MFLFAMGLLLVILQPSTG), serve as a signal peptide directing secretion. Residues 19–476 (QFPRVCANTQ…YLKQAHQIWP (458 aa)) lie on the Lumenal, melanosome side of the membrane. 3 N-linked (GlcNAc...) asparagine glycosylation sites follow: Asn-86, Asn-111, and Asn-161. Cu cation contacts are provided by His-180, His-202, and His-211. Residues Asn-230 and Asn-290 are each glycosylated (N-linked (GlcNAc...) asparagine). Residues 293–313 (SEGPILRNPGNNDKSRTPRLP) form a disordered region. N-linked (GlcNAc...) asparagine glycosylation is found at Asn-337 and Asn-356. Positions 363 and 367 each coordinate Cu cation. N-linked (GlcNAc...) asparagine glycosylation is present at Asn-371. Cu cation is bound at residue His-390. The chain crosses the membrane as a helical span at residues 477–497 (WLVGAAVIGGIITAVLSGLIL). Residues 498-529 (ACRKKRKGTSPEIQPLLTESEDYNNVSYQSHF) are Cytoplasmic-facing.

The protein belongs to the tyrosinase family. Cu(2+) is required as a cofactor.

The protein localises to the melanosome membrane. The protein resides in the melanosome. It carries out the reaction 2 L-dopa + O2 = 2 L-dopaquinone + 2 H2O. The catalysed reaction is L-tyrosine + O2 = L-dopaquinone + H2O. Its function is as follows. This is a copper-containing oxidase that functions in the formation of pigments such as melanins and other polyphenolic compounds. Catalyzes the initial and rate limiting step in the cascade of reactions leading to melanin production from tyrosine. In addition to hydroxylating tyrosine to DOPA (3,4-dihydroxyphenylalanine), also catalyzes the oxidation of DOPA to DOPA-quinone, and possibly the oxidation of DHI (5,6-dihydroxyindole) to indole-5,6 quinone. This is Tyrosinase (TYR) from Gallus gallus (Chicken).